The sequence spans 513 residues: Histidine ammonia-lyase (513 aa).

Positions 144 to 146 (ASG) form a cross-link, 5-imidazolinone (Ala-Gly). Ser145 bears the 2,3-didehydroalanine (Ser) mark.

It belongs to the PAL/histidase family. Post-translationally, contains an active site 4-methylidene-imidazol-5-one (MIO), which is formed autocatalytically by cyclization and dehydration of residues Ala-Ser-Gly.

It is found in the cytoplasm. The catalysed reaction is L-histidine = trans-urocanate + NH4(+). It participates in amino-acid degradation; L-histidine degradation into L-glutamate; N-formimidoyl-L-glutamate from L-histidine: step 1/3. This is Histidine ammonia-lyase from Streptococcus sanguinis (strain SK36).